Here is a 595-residue protein sequence, read N- to C-terminus: NADH-quinone oxidoreductase subunit C/D (595 aa).

The tract at residues 1-185 (MNKNICLSAS…NPFVLTKEKE (185 aa)) is NADH dehydrogenase I subunit C. Positions 209-595 (DFMFLNFGPN…IDFVMSDVDR (387 aa)) are NADH dehydrogenase I subunit D.

The protein in the N-terminal section; belongs to the complex I 30 kDa subunit family. It in the C-terminal section; belongs to the complex I 49 kDa subunit family. In terms of assembly, NDH-1 is composed of 13 different subunits. Subunits NuoB, CD, E, F, and G constitute the peripheral sector of the complex.

The protein resides in the cell inner membrane. It catalyses the reaction a quinone + NADH + 5 H(+)(in) = a quinol + NAD(+) + 4 H(+)(out). Its function is as follows. NDH-1 shuttles electrons from NADH, via FMN and iron-sulfur (Fe-S) centers, to quinones in the respiratory chain. The immediate electron acceptor for the enzyme in this species is believed to be ubiquinone. Couples the redox reaction to proton translocation (for every two electrons transferred, four hydrogen ions are translocated across the cytoplasmic membrane), and thus conserves the redox energy in a proton gradient. The protein is NADH-quinone oxidoreductase subunit C/D of Baumannia cicadellinicola subsp. Homalodisca coagulata.